The sequence spans 305 residues: MLDISIQELIKQWQKYLILQKNYSNNTVIAYNNDLKHFLEFMNYYNSELVTLNHIKTADIRLIRSWLAKRKCENFTASSIARGLSTVKNFYKFLEKTLLLNNHIIFSIKSPKKAKLLPKGLSVDDVLISLEHIEEYGNVKWVELRNKALIVLIYAAGLRISEALSITKLHLQNLEFIKIIGKGSKERIIPWLPLTKNLITKYLEILPYKLDENEPIFRGRQGKKLQPSVFNRELIKLKRIYGLPEYLTAHSFRHSFASHLLEYGADLRSIQELLGHKSLSTTQKYTQTSIKHLEAVYNTAYPIKK.

Residues 4–95 enclose the Core-binding (CB) domain; that stretch reads ISIQELIKQW…TVKNFYKFLE (92 aa). Positions 116-298 constitute a Tyr recombinase domain; it reads LLPKGLSVDD…SIKHLEAVYN (183 aa). Active-site residues include arginine 159, lysine 182, histidine 250, arginine 253, and histidine 276. The active-site O-(3'-phospho-DNA)-tyrosine intermediate is the tyrosine 285.

Belongs to the 'phage' integrase family. XerC subfamily. As to quaternary structure, forms a cyclic heterotetrameric complex composed of two molecules of XerC and two molecules of XerD.

Its subcellular location is the cytoplasm. Its function is as follows. Site-specific tyrosine recombinase, which acts by catalyzing the cutting and rejoining of the recombining DNA molecules. The XerC-XerD complex is essential to convert dimers of the bacterial chromosome into monomers to permit their segregation at cell division. It also contributes to the segregational stability of plasmids. The sequence is that of Tyrosine recombinase XerC (xerC) from Rickettsia prowazekii (strain Madrid E).